Reading from the N-terminus, the 273-residue chain is Multidrug-efflux transporter 2 regulator (273 aa).

The region spanning 8 to 77 (YFTTGEFSKL…LKEIKCLIKG (70 aa)) is the HTH merR-type domain. The segment at residues 11-30 (TGEFSKLCRVKKQTLFHYDE) is a DNA-binding region (H-T-H motif).

Functionally, activates transcription of the blt gene in response to structurally dissimilar drugs. The polypeptide is Multidrug-efflux transporter 2 regulator (bltR) (Bacillus subtilis (strain 168)).